Reading from the N-terminus, the 333-residue chain is Serine/threonine-protein phosphatase 4 catalytic subunit 1 (333 aa).

The interval 1 to 29 is disordered; that stretch reads MALAVADTQNETFARSESPTSGPSDQLST. Over residues 7–27 the composition is skewed to polar residues; sequence DTQNETFARSESPTSGPSDQL. Mn(2+) is bound by residues D79, H81, D107, and N139. Catalysis depends on H140, which acts as the Proton donor. Residues H189 and H264 each contribute to the Mn(2+) site. The residue at position 333 (L333) is a Leucine methyl ester.

It belongs to the PPP phosphatase family. PP-4 (PP-X) subfamily. As to quaternary structure, serine/threonine-protein phosphatase 4 (PP4) occurs in different assemblies of the catalytic and one or more regulatory subunits. The regulatory subunits are likely to be ppfr-1, ppfr-2, ppfr-4 and smk-1. Interacts with mei-1. It depends on Mn(2+) as a cofactor. In terms of processing, methylation at the C-terminal Leu-333 is critical for interactions with regulatory subunits.

It localises to the cytoplasm. It is found in the cytoskeleton. Its subcellular location is the microtubule organizing center. The protein localises to the centrosome. It catalyses the reaction O-phospho-L-seryl-[protein] + H2O = L-seryl-[protein] + phosphate. It carries out the reaction O-phospho-L-threonyl-[protein] + H2O = L-threonyl-[protein] + phosphate. Protein phosphatase which plays an essential role in meiosis and in early embryonic mitosis. During spermatocyte meiosis and the first embryonic mitosis, regulates centrosome maturation, and thus spindle formation, by recruiting some of the components of the pericentriolar material (PCM). During oocyte meiosis I, regulates meiotic chromosome dynamics including synapsis-independent chromosome pairing, restriction of synapsis to homologous chromosomes, programmed DNA double-strand break initiation and crossover formation resulting in chiasma formation. During oocyte meiosis II and probably together with regulatory subunit ppfr-1, may regulate microtubule severing by dephosphorylating and activating mei-1, a component of the katanin microtubule severing complex. The sequence is that of Serine/threonine-protein phosphatase 4 catalytic subunit 1 (pph-4.1) from Caenorhabditis briggsae.